An 80-amino-acid polypeptide reads, in one-letter code: Clavanin-C (80 aa).

A signal peptide spans 1-19 (MKTTILILLILGLGINAKS). Positions 20–29 (LEERKSEEEK) are excised as a propeptide. Position 52 is a phenylalanine amide (Phe-52). The propeptide occupies 54–80 (DDQQDNGKFYGHYAEDNGKHWYDTGDQ).

In terms of tissue distribution, hemocytes and pharyngeal tissues.

The protein localises to the secreted. Functionally, has antimicrobial activity against E.coli, L.monocytogenes and C.albicans. The protein is Clavanin-C of Styela clava (Sea squirt).